The chain runs to 312 residues: Elongation factor Ts (312 aa).

An involved in Mg(2+) ion dislocation from EF-Tu region spans residues 80 to 83 (TDFV).

Belongs to the EF-Ts family.

Its subcellular location is the cytoplasm. Associates with the EF-Tu.GDP complex and induces the exchange of GDP to GTP. It remains bound to the aminoacyl-tRNA.EF-Tu.GTP complex up to the GTP hydrolysis stage on the ribosome. This is Elongation factor Ts from Maricaulis maris (strain MCS10) (Caulobacter maris).